An 80-amino-acid chain; its full sequence is Lantibiotic Flvalpha.c (80 aa).

Positions 1–38 (MNKNPIYRSEEEAKNIACGNVAAELDENSQALDAINGA) are cleaved as a propeptide — cleaved by FlvT. Residues Thr-43 and Thr-47 each carry the 2,3-didehydrobutyrine; by FlvM1 modification. Residues 52 to 55 (TLGC) constitute a cross-link (beta-methyllanthionine (Thr-Cys); by FlvM1). Positions 58–68 (SYGLGNGGYCC) form a cross-link, lanthionine (Ser-Cys); by FlvM1. 2 cross-links (beta-methyllanthionine (Thr-Cys); by FlvM1) span residues 69 to 74 (TYTVEC) and 71 to 78 (TVECSKTC).

The lanthionine formed by Ser-58 and Cys-68 forms a putative lipid II binding motif. In terms of processing, maturation of FlvA1 peptides involves the enzymatic conversion of Thr, and Ser into dehydrated AA and the formation of thioether bonds with cysteines. Modifications are processed by the flavecin synthetase FlvM1. This is followed by membrane translocation and cleavage of the modified precursor. Post-translationally, contains DL-lanthionine and DL-beta-methyllanthionine, when coepressed in E.coli with the flavecin synthetase FlvM1.

It localises to the secreted. In terms of biological role, lanthionine-containing peptide antibiotic (lantibiotic) only active on Gram-positive bacteria in synergy with Flvbeta peptides, which are encoded by the same operon than Flvalpha.a. Shows antibacterial activity in synergy with Flvbeta.b, Flvbeta.c, Flvbeta.e and Flvbeta.g. Does not show antibacterial activity when tested with Flvbeta.a, Flvbeta.d, Flvbeta.f and Flvbeta.h. The bactericidal activity of lantibiotics is based on depolarization of energized bacterial cytoplasmic membranes, initiated by the formation of aqueous transmembrane pores. The sequence is that of Lantibiotic Flvalpha.c from Ruminococcus flavefaciens.